A 377-amino-acid polypeptide reads, in one-letter code: Chaperone protein DnaJ (377 aa).

The J domain maps to 5-70 (DYYEILGVSK…QKRAAYDQYG (66 aa)). The CR-type zinc-finger motif lies at 132-210 (GVTKEIRIPT…CHGHGRVEKT (79 aa)). Cys-145, Cys-148, Cys-162, Cys-165, Cys-184, Cys-187, Cys-198, and Cys-201 together coordinate Zn(2+). CXXCXGXG motif repeat units lie at residues 145 to 152 (CDVCHGSG), 162 to 169 (CPTCHGAG), 184 to 191 (CPHCQGRG), and 198 to 205 (CNKCHGHG).

Belongs to the DnaJ family. Homodimer. Zn(2+) is required as a cofactor.

It is found in the cytoplasm. Its function is as follows. Participates actively in the response to hyperosmotic and heat shock by preventing the aggregation of stress-denatured proteins and by disaggregating proteins, also in an autonomous, DnaK-independent fashion. Unfolded proteins bind initially to DnaJ; upon interaction with the DnaJ-bound protein, DnaK hydrolyzes its bound ATP, resulting in the formation of a stable complex. GrpE releases ADP from DnaK; ATP binding to DnaK triggers the release of the substrate protein, thus completing the reaction cycle. Several rounds of ATP-dependent interactions between DnaJ, DnaK and GrpE are required for fully efficient folding. Also involved, together with DnaK and GrpE, in the DNA replication of plasmids through activation of initiation proteins. The sequence is that of Chaperone protein DnaJ from Klebsiella pneumoniae (strain 342).